Here is a 140-residue protein sequence, read N- to C-terminus: ATP synthase epsilon chain (140 aa).

Belongs to the ATPase epsilon chain family. In terms of assembly, F-type ATPases have 2 components, CF(1) - the catalytic core - and CF(0) - the membrane proton channel. CF(1) has five subunits: alpha(3), beta(3), gamma(1), delta(1), epsilon(1). CF(0) has three main subunits: a, b and c.

Its subcellular location is the cell inner membrane. Its function is as follows. Produces ATP from ADP in the presence of a proton gradient across the membrane. The chain is ATP synthase epsilon chain from Stenotrophomonas maltophilia (strain R551-3).